The primary structure comprises 133 residues: Large ribosomal subunit protein bL17 (133 aa).

Belongs to the bacterial ribosomal protein bL17 family. As to quaternary structure, part of the 50S ribosomal subunit. Contacts protein L32.

In Polaromonas naphthalenivorans (strain CJ2), this protein is Large ribosomal subunit protein bL17.